Here is a 237-residue protein sequence, read N- to C-terminus: Oligoribonuclease, mitochondrial (237 aa).

Residues 1-25 (MLGGSLGSRLLRGVGGSHGRFGARG) constitute a mitochondrion transit peptide. The region spanning 43-207 (MVWVDLEMTG…DDISESIKEL (165 aa)) is the Exonuclease domain. 2 residues coordinate Mg(2+): D47 and E49. S92 is subject to Phosphoserine. Residue Y122 is modified to Phosphotyrosine. D147 lines the Mg(2+) pocket. K173 carries the N6-acetyllysine modification. H194 is a catalytic residue. D199 contributes to the Mg(2+) binding site.

The protein belongs to the oligoribonuclease family. As to quaternary structure, homodimer. Homotetramer. Mn(2+) is required as a cofactor. Mg(2+) serves as cofactor. As to expression, highly expressed in the heart and at lower levels in the lymph nodes, brain, lung, liver, spleen and thymus.

It is found in the mitochondrion intermembrane space. The protein resides in the mitochondrion matrix. Its subcellular location is the mitochondrion. The protein localises to the cytoplasm. It localises to the nucleus. Inhibited by adenosine 3',5'-bisphosphate. Its function is as follows. 3'-to-5'exoribonuclease that preferentially degrades DNA and RNA oligonucleotides composed of only two nucleotides. Binds and degrades longer oligonucleotides with a lower affinity. Plays dual roles in mitochondria, scavenging nanoRNAs (small RNA oligonucleotides of &lt;5 nucleotides) that are produced by the degradosome and clearing short RNAs that are generated by RNA processing. Essential for correct initiation of mitochondrial transcription, degrading mitochondrial RNA dinucleotides to prevent RNA-primed transcription at non-canonical sites in the mitochondrial genome. Essential for embryonic development. 3'-to-5'exoribonuclease that preferentially degrades DNA and RNA oligonucleotides composed of only two nucleotides. This chain is Oligoribonuclease, mitochondrial (REXO2), found in Homo sapiens (Human).